Reading from the N-terminus, the 114-residue chain is Aspartate 1-decarboxylase (114 aa).

Residue serine 25 is the Schiff-base intermediate with substrate; via pyruvic acid of the active site. Serine 25 carries the pyruvic acid (Ser) modification. Threonine 57 is a substrate binding site. The Proton donor role is filled by tyrosine 58. 71 to 73 is a binding site for substrate; sequence GAA.

Belongs to the PanD family. Heterooctamer of four alpha and four beta subunits. Pyruvate serves as cofactor. In terms of processing, is synthesized initially as an inactive proenzyme, which is activated by self-cleavage at a specific serine bond to produce a beta-subunit with a hydroxyl group at its C-terminus and an alpha-subunit with a pyruvoyl group at its N-terminus.

It is found in the cytoplasm. The enzyme catalyses L-aspartate + H(+) = beta-alanine + CO2. It participates in cofactor biosynthesis; (R)-pantothenate biosynthesis; beta-alanine from L-aspartate: step 1/1. Catalyzes the pyruvoyl-dependent decarboxylation of aspartate to produce beta-alanine. The protein is Aspartate 1-decarboxylase of Haloquadratum walsbyi (strain DSM 16790 / HBSQ001).